Here is a 377-residue protein sequence, read N- to C-terminus: Nitric oxide reductase FlRd-NAD(+) reductase (377 aa).

The protein belongs to the FAD-dependent oxidoreductase family. FAD is required as a cofactor.

The protein resides in the cytoplasm. It catalyses the reaction 2 reduced [nitric oxide reductase rubredoxin domain] + NAD(+) + H(+) = 2 oxidized [nitric oxide reductase rubredoxin domain] + NADH. The protein operates within nitrogen metabolism; nitric oxide reduction. Its function is as follows. One of at least two accessory proteins for anaerobic nitric oxide (NO) reductase. Reduces the rubredoxin moiety of NO reductase. This chain is Nitric oxide reductase FlRd-NAD(+) reductase, found in Escherichia coli (strain SMS-3-5 / SECEC).